The following is an 899-amino-acid chain: Protein translocase subunit SecA (899 aa).

ATP contacts are provided by residues Q87, 105-109, and D516; that span reads GEGKT. Zn(2+)-binding residues include C884, C886, C895, and H896.

Belongs to the SecA family. As to quaternary structure, monomer and homodimer. Part of the essential Sec protein translocation apparatus which comprises SecA, SecYEG and auxiliary proteins SecDF. Other proteins may also be involved. It depends on Zn(2+) as a cofactor.

The protein resides in the cell inner membrane. The protein localises to the cytoplasm. The enzyme catalyses ATP + H2O + cellular proteinSide 1 = ADP + phosphate + cellular proteinSide 2.. Its function is as follows. Part of the Sec protein translocase complex. Interacts with the SecYEG preprotein conducting channel. Has a central role in coupling the hydrolysis of ATP to the transfer of proteins into and across the cell membrane, serving as an ATP-driven molecular motor driving the stepwise translocation of polypeptide chains across the membrane. This is Protein translocase subunit SecA from Borreliella burgdorferi (strain ZS7) (Borrelia burgdorferi).